The chain runs to 787 residues: Endonuclease MutS2 (787 aa).

Gly334–Thr341 provides a ligand contact to ATP. The Smr domain occupies Leu712–Lys787.

The protein belongs to the DNA mismatch repair MutS family. MutS2 subfamily. As to quaternary structure, homodimer. Binds to stalled ribosomes, contacting rRNA.

Its function is as follows. Endonuclease that is involved in the suppression of homologous recombination and thus may have a key role in the control of bacterial genetic diversity. Functionally, acts as a ribosome collision sensor, splitting the ribosome into its 2 subunits. Detects stalled/collided 70S ribosomes which it binds and splits by an ATP-hydrolysis driven conformational change. Acts upstream of the ribosome quality control system (RQC), a ribosome-associated complex that mediates the extraction of incompletely synthesized nascent chains from stalled ribosomes and their subsequent degradation. Probably generates substrates for RQC. This chain is Endonuclease MutS2, found in Latilactobacillus sakei subsp. sakei (strain 23K) (Lactobacillus sakei subsp. sakei).